The primary structure comprises 267 residues: 5'-nucleotidase SurE (267 aa).

The a divalent metal cation site is built by D9, D10, S40, and N97.

It belongs to the SurE nucleotidase family. A divalent metal cation serves as cofactor.

The protein resides in the cytoplasm. The catalysed reaction is a ribonucleoside 5'-phosphate + H2O = a ribonucleoside + phosphate. Nucleotidase that shows phosphatase activity on nucleoside 5'-monophosphates. In Helicobacter pylori (strain Shi470), this protein is 5'-nucleotidase SurE.